Consider the following 268-residue polypeptide: Proenkephalin-A (268 aa).

The N-terminal stretch at 1–24 (MARFLRLCTWLLVLGSCLLATVQA) is a signal peptide. 3 disulfide bridges follow: C26/C48, C30/C52, and C33/C65. Residues 162-185 (GTGDNRAREGRHQESTDNDDNMSK) are disordered. Residues 166–176 (NRAREGRHQES) are compositionally biased toward basic and acidic residues. Propeptides lie at residues 197-208 (SPQVEDEAKELQ) and 218-228 (VGRPEWWMDYQ). S252 carries the phosphoserine modification.

Belongs to the opioid neuropeptide precursor family. Proenkephalin-A is cleaved by CTSL to generate Met-enkephalin. Post-translationally, processed and degraded by ACE. In terms of processing, probably cleaved by ACE. Processed by ACE to generate Met-enkephalin in the nucleus accumbens of the brain. Post-translationally, the N-terminal domain contains 6 conserved cysteines thought to be involved in disulfide bonding and/or processing.

It is found in the cytoplasmic vesicle. It localises to the secretory vesicle. The protein localises to the chromaffin granule lumen. The protein resides in the secreted. Neuropeptide that competes with and mimic the effects of opiate drugs. They play a role in a number of physiologic functions, including pain perception and responses to stress. Functionally, met-enkephalin-Arg-Phe neuropeptide acts as a strong ligand of Mu-type opioid receptor OPRM1. Met-enkephalin-Arg-Phe-binding to OPRM1 in the nucleus accumbens of the brain increases activation of OPRM1, leading to long-term synaptic depression of glutamate release. In terms of biological role, increases glutamate release in the striatum and decreases GABA concentration in the striatum. Its function is as follows. Increases glutamate release in the striatum. This chain is Proenkephalin-A (PENK), found in Mesocricetus auratus (Golden hamster).